A 358-amino-acid polypeptide reads, in one-letter code: Histidinol-phosphate aminotransferase (358 aa).

At Lys217 the chain carries N6-(pyridoxal phosphate)lysine.

This sequence belongs to the class-II pyridoxal-phosphate-dependent aminotransferase family. Histidinol-phosphate aminotransferase subfamily. In terms of assembly, homodimer. The cofactor is pyridoxal 5'-phosphate.

The catalysed reaction is L-histidinol phosphate + 2-oxoglutarate = 3-(imidazol-4-yl)-2-oxopropyl phosphate + L-glutamate. It participates in amino-acid biosynthesis; L-histidine biosynthesis; L-histidine from 5-phospho-alpha-D-ribose 1-diphosphate: step 7/9. In Ruminiclostridium cellulolyticum (strain ATCC 35319 / DSM 5812 / JCM 6584 / H10) (Clostridium cellulolyticum), this protein is Histidinol-phosphate aminotransferase.